The primary structure comprises 267 residues: Nanos homolog 1 (267 aa).

Positions 40–56 (FSSWNDYLGLATLITRA) are essential for its translational repressor activity. The disordered stretch occupies residues 57-94 (SDRGSPHEGPGPTAAGPTMGPPEDDEDDDGEEPEAGGR). Residues 78 to 90 (PEDDEDDDGEEPE) show a composition bias toward acidic residues. The Nanos-type zinc-finger motif lies at 188 to 242 (VCVFCRNNKEAVALYTTHILKGPDGRVLCPVLRRYTCPLCGASGDNAHTIKYCPL). 8 residues coordinate Zn(2+): Cys189, Cys192, His205, Cys216, Cys224, Cys227, His235, and Cys240. 2 consecutive short sequence motifs (C2HC) follow at residues 189 to 216 (CVFC…RVLC) and 224 to 240 (CPLC…IKYC). The segment at 243 to 267 (SKVPPPTVRPPPRSNRDSLPSKKLR) is disordered. Positions 244–255 (KVPPPTVRPPPR) are enriched in pro residues. Basic and acidic residues predominate over residues 256 to 267 (SNRDSLPSKKLR).

This sequence belongs to the nanos family. In terms of assembly, interacts with PUM2, SNAPIN and CTNNB1. Interacts (via N-terminal region) with CTNND1. Interacts with DDX20 (via N-terminal region). In terms of tissue distribution, expressed in the oocyte. Transiently expressed in eight-cell embryos. At 12.5 dpc, it is re-expressed in the central nervous system and the expression continues in the adult brain, in which the hippocampal formation is the predominant region. Expressed in the seminiferous tubules of mature testis, but not in the primordial germ cells.

It is found in the cytoplasm. It localises to the perinuclear region. May act as a translational repressor which regulates translation of specific mRNAs by forming a complex with PUM2 that associates with the 3'-UTR of mRNA targets. Capable of interfering with the proadhesive and anti-invasive functions of E-cadherin. Up-regulates the production of MMP14 to promote tumor cell invasion. Not essential for normal development. In Mus musculus (Mouse), this protein is Nanos homolog 1 (Nanos1).